The chain runs to 355 residues: 6-aminohexanoate-oligomer endohydrolase (355 aa).

Threonine 267 acts as the Nucleophile in catalysis.

This sequence belongs to the peptidase S58 family. In terms of assembly, heterotetramer composed of 4 alpha/beta heterodimers. In terms of processing, expressed as an inactive precursor that is cleaved autocatalytically at Asn266/Thr267 to generate an active enzyme composed of an alpha subunit and a beta subunit.

It carries out the reaction [N-(6-aminohexanoyl)]n + H2O = [N-(6-aminohexanoyl)]n-x + [N-(6-aminohexanoyl)]x.. The protein operates within xenobiotic degradation; nylon-6 oligomer degradation. Functionally, involved in the degradation of nylon-6 oligomers. Degrades cyclic and linear oligomers of 6-aminohexanoate (Ahx) with a degree of polymerization greater than three by an endo-type mode. Cannot use Ahx cyclic dimer or the Ahx linear dimer. The chain is 6-aminohexanoate-oligomer endohydrolase from Agromyces sp. (strain KY5R).